A 589-amino-acid polypeptide reads, in one-letter code: METKSSTSLPAKKLRQPIVCVLGHVDHGKTTLLDIIRGTAVANKEPGGITQRIAATTVDINKILKATEKLNNKGMKIPGLLFIDTPGHVAFSNMRARGGALADIAVLVIDINEGIMPQTVESIDILKKFKTPFIIAANKIDLIPFFTDVKTNLFTEFIRKQRQEYVNELDARIYNIVNKLYEYGLNSDRFDRISDFTKTIAIVPVSAKKNIGVPEILMVLAGLAQRFLESEIEYKDINGHATIIEVRREESAGIALDAVLYQGTISVGDTVAVNTKTGPVTTKVKALFVNTGKSQRSLKEVETVSAAEGIRVLISDKLDVISGSPLIVVKGNMEQVMKEIEEASKVDIPLDENGIYVKAEAIGSLEAISYELNKQGIKIRAAAVGDITKRDVMDVQTLQDPLNRIIIGFNVSILPEAKDAIESSDVGVITGDIIYKIVEDTQKWIEERKKQLSQKRKEAMPVPAKIRILPQYIFRASKPVIVGIRVETGQIKVGDNLIRSDGKYAGTIKSIRNDEVSVRYQDAPAEVAVAIDNVTLNRQIFPDDVLYVDIPESVVKELRKAPMEKEIMDTLEEIIKIKRKENPFWGTKV.

The region spanning 14–231 (LRQPIVCVLG…GLAQRFLESE (218 aa)) is the tr-type G domain. The interval 23–30 (GHVDHGKT) is G1. 23-30 (GHVDHGKT) contributes to the GTP binding site. A G2 region spans residues 48-52 (GITQR). The tract at residues 84–87 (DTPG) is G3. GTP contacts are provided by residues 84 to 88 (DTPGH) and 138 to 141 (NKID). A G4 region spans residues 138–141 (NKID). The G5 stretch occupies residues 206 to 208 (SAK).

This sequence belongs to the TRAFAC class translation factor GTPase superfamily. Classic translation factor GTPase family. IF-2 subfamily.

In terms of biological role, function in general translation initiation by promoting the binding of the formylmethionine-tRNA to ribosomes. Seems to function along with eIF-2. The sequence is that of Probable translation initiation factor IF-2 from Thermoplasma volcanium (strain ATCC 51530 / DSM 4299 / JCM 9571 / NBRC 15438 / GSS1).